The following is a 255-amino-acid chain: Small ribosomal subunit protein uS2 (255 aa).

Residues 230-255 (QSSSGRDLGASSEVPVEPALEEAAEG) form a disordered region.

This sequence belongs to the universal ribosomal protein uS2 family.

This Rhizobium leguminosarum bv. trifolii (strain WSM2304) protein is Small ribosomal subunit protein uS2.